We begin with the raw amino-acid sequence, 335 residues long: MEGIKFNQIGVSFKGSGSYVPDQILTNETISQKVDTSDEWIKSRTGISERRISGLGDNVNDMAYEAALSAIEMTNWDIKTIDLIVLATSTPHDLFGSAPSIQAKLGAHNAVAFDLTAACSGFLFALITASQFLKGGSFKRAIVIGADQLSSFVDWNDRRSCILFGDGAGALAIEATNEFDNFLGFDMRTDGERGSFLNLPSKNNKDLIIDNIDFLNGGFSPIQMNGQEVYKFAVREVPIILDNLFRKTNYTSDEVDWLILHQANQRILDSVGDRLKIPREKILSNLAKYGNTSAATIPLVMDEAIRNNRIKQNDIIATSGFGAGLSWGAALIKWG.

Residues C119 and H261 contribute to the active site. The segment at 262 to 266 is ACP-binding; that stretch reads QANQR. The active site involves N291.

The protein belongs to the thiolase-like superfamily. FabH family. In terms of assembly, homodimer.

The protein resides in the cytoplasm. It carries out the reaction malonyl-[ACP] + acetyl-CoA + H(+) = 3-oxobutanoyl-[ACP] + CO2 + CoA. Its pathway is lipid metabolism; fatty acid biosynthesis. Its function is as follows. Catalyzes the condensation reaction of fatty acid synthesis by the addition to an acyl acceptor of two carbons from malonyl-ACP. Catalyzes the first condensation reaction which initiates fatty acid synthesis and may therefore play a role in governing the total rate of fatty acid production. Possesses both acetoacetyl-ACP synthase and acetyl transacylase activities. Its substrate specificity determines the biosynthesis of branched-chain and/or straight-chain of fatty acids. In Prochlorococcus marinus (strain MIT 9312), this protein is Beta-ketoacyl-[acyl-carrier-protein] synthase III.